A 420-amino-acid polypeptide reads, in one-letter code: Serine hydroxymethyltransferase (420 aa).

Residues Leu-121 and 125 to 127 (GHL) contribute to the (6S)-5,6,7,8-tetrahydrofolate site. Lys-229 is modified (N6-(pyridoxal phosphate)lysine).

Belongs to the SHMT family. As to quaternary structure, homodimer. Requires pyridoxal 5'-phosphate as cofactor.

The protein localises to the cytoplasm. It carries out the reaction (6R)-5,10-methylene-5,6,7,8-tetrahydrofolate + glycine + H2O = (6S)-5,6,7,8-tetrahydrofolate + L-serine. It participates in one-carbon metabolism; tetrahydrofolate interconversion. It functions in the pathway amino-acid biosynthesis; glycine biosynthesis; glycine from L-serine: step 1/1. In terms of biological role, catalyzes the reversible interconversion of serine and glycine with tetrahydrofolate (THF) serving as the one-carbon carrier. This reaction serves as the major source of one-carbon groups required for the biosynthesis of purines, thymidylate, methionine, and other important biomolecules. Also exhibits THF-independent aldolase activity toward beta-hydroxyamino acids, producing glycine and aldehydes, via a retro-aldol mechanism. The sequence is that of Serine hydroxymethyltransferase from Wigglesworthia glossinidia brevipalpis.